Reading from the N-terminus, the 421-residue chain is MDIKQYMKEVGQRARKASRAMAKADTAAKNQALSLIAAAIRRDADILRAANQVDLVAARLNGLEPAMLDRLTLSDKAIATMAEGLEQIVALPDPIGEISNMKYRPTGIQVGQMRVPLGVIGIIYEARPNVTVDAAGLCIKSGNATILRGGSEAIHCNQALAKLVSEGLAGAGLPADAVQIVETTDRAAVGELITMPEYVDVIVPRGGKGLIERLMKESKVPMIKHLDGICHVYIDDKADPAKALDIAFNAKCHRYGTCNTMETLLVARAIAPTILPALAKLYATRDVELRGDDEARAILQGYAHLAAASAEDWSTEYLDAILSVKIVADMDEAIDHINTYSSKHTDSIVTEDYTRAMRFLREVDSASVMINASTRFADGFEYGLGAEIGISNDKLHARGPVGLDGLTSLKYVVFGHGEVRE.

It belongs to the gamma-glutamyl phosphate reductase family.

It is found in the cytoplasm. The enzyme catalyses L-glutamate 5-semialdehyde + phosphate + NADP(+) = L-glutamyl 5-phosphate + NADPH + H(+). The protein operates within amino-acid biosynthesis; L-proline biosynthesis; L-glutamate 5-semialdehyde from L-glutamate: step 2/2. Functionally, catalyzes the NADPH-dependent reduction of L-glutamate 5-phosphate into L-glutamate 5-semialdehyde and phosphate. The product spontaneously undergoes cyclization to form 1-pyrroline-5-carboxylate. This chain is Gamma-glutamyl phosphate reductase, found in Herminiimonas arsenicoxydans.